Consider the following 410-residue polypeptide: Tryptophan synthase beta chain (410 aa).

Lysine 99 carries the post-translational modification N6-(pyridoxal phosphate)lysine.

It belongs to the TrpB family. Tetramer of two alpha and two beta chains. The cofactor is pyridoxal 5'-phosphate.

The enzyme catalyses (1S,2R)-1-C-(indol-3-yl)glycerol 3-phosphate + L-serine = D-glyceraldehyde 3-phosphate + L-tryptophan + H2O. It functions in the pathway amino-acid biosynthesis; L-tryptophan biosynthesis; L-tryptophan from chorismate: step 5/5. In terms of biological role, the beta subunit is responsible for the synthesis of L-tryptophan from indole and L-serine. This is Tryptophan synthase beta chain from Pseudomonas fluorescens (strain Pf0-1).